Here is a 207-residue protein sequence, read N- to C-terminus: NADH-quinone oxidoreductase subunit C (207 aa).

Belongs to the complex I 30 kDa subunit family. NDH-1 is composed of 14 different subunits. Subunits NuoB, C, D, E, F, and G constitute the peripheral sector of the complex.

It localises to the cell inner membrane. It carries out the reaction a quinone + NADH + 5 H(+)(in) = a quinol + NAD(+) + 4 H(+)(out). Functionally, NDH-1 shuttles electrons from NADH, via FMN and iron-sulfur (Fe-S) centers, to quinones in the respiratory chain. The immediate electron acceptor for the enzyme in this species is believed to be ubiquinone. Couples the redox reaction to proton translocation (for every two electrons transferred, four hydrogen ions are translocated across the cytoplasmic membrane), and thus conserves the redox energy in a proton gradient. The chain is NADH-quinone oxidoreductase subunit C from Thermus thermophilus (strain ATCC BAA-163 / DSM 7039 / HB27).